Here is a 1938-residue protein sequence, read N- to C-terminus: Myosin-6 (1938 aa).

The Myosin N-terminal SH3-like domain occupies 32 to 81 (DIRTECFVPDDKEEYVKAKVVSREGGKVTAETENGKTVTIKEDQVMQQNP). Residues 85 to 780 (DKIEDMAMLT…LLGLLEEMRD (696 aa)) enclose the Myosin motor domain. Lys129 carries the post-translational modification N6,N6,N6-trimethyllysine. Position 178 to 185 (178 to 185 (GESGAGKT)) interacts with ATP. A Phosphothreonine modification is found at Thr379. Ser417 is modified (phosphoserine). Actin-binding stretches follow at residues 657-679 (LNKLMTNLKTTHPHFVRCIIPNE) and 759-773 (KFGHTKVFFKAGLLG). Residues 783–812 (LSRIITRIQAQARGQLMRIEFKKIVERRDA) form the IQ domain. Calmodulin-binding regions lie at residues 790-807 (IQAQARGQLMRIEFKKIV) and 816-833 (IQWNIRAFMGVKNWPWMK). A coiled-coil region spans residues 842–1938 (LKSAETEKEM…IGAKKMHDEE (1097 aa)). Ser1090 and Ser1139 each carry phosphoserine. At Tyr1261 the chain carries Phosphotyrosine. At Ser1271 the chain carries Phosphoserine. A phosphothreonine mark is found at Thr1277 and Thr1284. The residue at position 1309 (Ser1309) is a Phosphoserine. Position 1310 is a phosphotyrosine (Tyr1310). Residue Thr1311 is modified to Phosphothreonine. Ser1512 bears the Phosphoserine mark. Thr1515 carries the post-translational modification Phosphothreonine. Residues 1909–1938 (EERADIAESQVNKLRAKSRDIGAKKMHDEE) are disordered. Residues 1925-1938 (KSRDIGAKKMHDEE) are compositionally biased toward basic and acidic residues.

Belongs to the TRAFAC class myosin-kinesin ATPase superfamily. Myosin family. As to quaternary structure, muscle myosin is a hexameric protein that consists of 2 heavy chain subunits (MHC), 2 alkali light chain subunits (MLC) and 2 regulatory light chain subunits (MLC-2).

It localises to the cytoplasm. It is found in the myofibril. Muscle contraction. The sequence is that of Myosin-6 (Myh6) from Mus musculus (Mouse).